Consider the following 400-residue polypeptide: MSERVILAYSGGLDTSVAISWIGKETGREVVAVAIDLGQGGEDMDVVRQRALDCGAVEAVVIDARDEFAEDYCLPAIQSNALYMDRYPLVSALSRPLIVKHLVDAAREHKGGIVAHGCTGKGNDQVRFEVGFASLAPDLEVLAPVRDYAWTREKAIAFAEENAIPINVTKRSPFSIDQNVWGRAVETGFLEHLWNAPTKDVYDYTEDPTLNWSTPDEVIVGFDKGVPVSIDGRDVTVLQAIEELNRRAGAQGVGRLDVVEDRLVGIKSREIYEAPGAMVLITAHTELEHVTLERELGRFKRTTDQKWGELVYDGLWFSPLKTALESFVAKTQEHVSGEIRLVLHGGHIAVNGRRSQESLYDFNLATYDEGDTFDQSSAKGFVHVHGLSSSISARRDLGIK.

An ATP-binding site is contributed by 8-16; that stretch reads AYSGGLDTS. Tyr87 serves as a coordination point for L-citrulline. An ATP-binding site is contributed by Gly117. L-aspartate is bound by residues Thr119, Asn123, and Asp124. Asn123 provides a ligand contact to L-citrulline. The L-citrulline site is built by Arg127, Ser175, Glu260, and Tyr272.

It belongs to the argininosuccinate synthase family. Type 1 subfamily. In terms of assembly, homotetramer.

It localises to the cytoplasm. It carries out the reaction L-citrulline + L-aspartate + ATP = 2-(N(omega)-L-arginino)succinate + AMP + diphosphate + H(+). The protein operates within amino-acid biosynthesis; L-arginine biosynthesis; L-arginine from L-ornithine and carbamoyl phosphate: step 2/3. This Mycobacterium sp. (strain KMS) protein is Argininosuccinate synthase.